The sequence spans 301 residues: Prohibitin-2 (301 aa).

Necessary for transcriptional repression regions lie at residues 19–49 (MGTA…GHRA) and 150–174 (ASQL…RAKD). The stretch at 191–237 (REYTAAVESKQVAQQEAQRAQFLVEKAKQDQKQKIVQAEGEAAAAKM) forms a coiled coil.

This sequence belongs to the prohibitin family. As to quaternary structure, the mitochondrial prohibitin complex consists of two subunits (PHB1 and PHB2), assembled into a membrane-associated ring-shaped supercomplex of approximately 1 mDa.

The protein resides in the mitochondrion inner membrane. It is found in the cytoplasm. It localises to the nucleus. Its subcellular location is the cell membrane. Its function is as follows. Protein with pleiotropic attributes mediated in a cell-compartment- and tissue-specific manner, which include the plasma membrane-associated cell signaling functions, mitochondrial chaperone, and transcriptional co-regulator of transcription factors and sex steroid hormones in the nucleus. Functionally, in the mitochondria, together with PHB, forms large ring complexes (prohibitin complexes) in the inner mitochondrial membrane (IMM) and functions as a chaperone protein that stabilizes mitochondrial respiratory enzymes and maintains mitochondrial integrity in the IMM, which is required for mitochondrial morphogenesis, neuronal survival, and normal lifespan. In the nucleus, serves as transcriptional co-regulator. The protein is Prohibitin-2 (phb2) of Xenopus tropicalis (Western clawed frog).